Reading from the N-terminus, the 304-residue chain is ATP phosphoribosyltransferase (304 aa).

Belongs to the ATP phosphoribosyltransferase family. Long subfamily. Requires Mg(2+) as cofactor.

It localises to the cytoplasm. The enzyme catalyses 1-(5-phospho-beta-D-ribosyl)-ATP + diphosphate = 5-phospho-alpha-D-ribose 1-diphosphate + ATP. It participates in amino-acid biosynthesis; L-histidine biosynthesis; L-histidine from 5-phospho-alpha-D-ribose 1-diphosphate: step 1/9. With respect to regulation, feedback inhibited by histidine. Its function is as follows. Catalyzes the condensation of ATP and 5-phosphoribose 1-diphosphate to form N'-(5'-phosphoribosyl)-ATP (PR-ATP). Has a crucial role in the pathway because the rate of histidine biosynthesis seems to be controlled primarily by regulation of HisG enzymatic activity. The polypeptide is ATP phosphoribosyltransferase (Xylella fastidiosa (strain 9a5c)).